Consider the following 323-residue polypeptide: MIRSVVRGFGAALPKRVMTNRDMEQVVDTSDDWIVQRTGIRQRYIAGEGETTASLGEQAARAALANAGLTADDLDMIIVATSTPDNTFPATAVNIQNRLGMHHGFAFDVQAVCSGFVYAVTTADAYIRGGVAKRVLVIGAETFSRILDWTDRTTCVLFGDGAGALILEAGEGTGANTDRGVLTASLRSDGAHKDKLYVDGGPSSTGTVGVLHMAGREVFKHAVGMITDVIEATFKAADVTADDLDWLVPHQANRRIIDGSAKKLGIAPEKVVVTVDLHGNTSAASIPLALAVAAGDGRIKRGDLVMLEAMGGGFTWGAVLLRW.

Active-site residues include C113 and H250. Positions Q251–R255 are ACP-binding. The active site involves N280.

The protein belongs to the thiolase-like superfamily. FabH family. In terms of assembly, homodimer.

It is found in the cytoplasm. The enzyme catalyses malonyl-[ACP] + acetyl-CoA + H(+) = 3-oxobutanoyl-[ACP] + CO2 + CoA. It participates in lipid metabolism; fatty acid biosynthesis. Functionally, catalyzes the condensation reaction of fatty acid synthesis by the addition to an acyl acceptor of two carbons from malonyl-ACP. Catalyzes the first condensation reaction which initiates fatty acid synthesis and may therefore play a role in governing the total rate of fatty acid production. Possesses both acetoacetyl-ACP synthase and acetyl transacylase activities. Its substrate specificity determines the biosynthesis of branched-chain and/or straight-chain of fatty acids. The chain is Beta-ketoacyl-[acyl-carrier-protein] synthase III from Rhizobium rhizogenes (strain K84 / ATCC BAA-868) (Agrobacterium radiobacter).